The sequence spans 101 residues: Small ribosomal subunit protein uS14 (101 aa).

This sequence belongs to the universal ribosomal protein uS14 family. Part of the 30S ribosomal subunit. Contacts proteins S3 and S10.

Its function is as follows. Binds 16S rRNA, required for the assembly of 30S particles and may also be responsible for determining the conformation of the 16S rRNA at the A site. The protein is Small ribosomal subunit protein uS14 of Xylella fastidiosa (strain M23).